The sequence spans 259 residues: Phosphatidylglycerol--prolipoprotein diacylglyceryl transferase (259 aa).

The next 4 helical transmembrane spans lie at 12–32 (LSLH…VYLA), 46–66 (IIDF…IYYV), 83–103 (IWNG…VLFV), and 109–129 (VLNP…AQAI). Residue R131 coordinates a 1,2-diacyl-sn-glycero-3-phospho-(1'-sn-glycerol). The next 3 membrane-spanning stretches (helical) occupy residues 167-187 (VPTF…IMVW), 194-214 (LLDG…RLVI), and 226-246 (GIRV…VFIF).

Belongs to the Lgt family.

The protein localises to the cell membrane. It carries out the reaction L-cysteinyl-[prolipoprotein] + a 1,2-diacyl-sn-glycero-3-phospho-(1'-sn-glycerol) = an S-1,2-diacyl-sn-glyceryl-L-cysteinyl-[prolipoprotein] + sn-glycerol 1-phosphate + H(+). Its pathway is protein modification; lipoprotein biosynthesis (diacylglyceryl transfer). Functionally, catalyzes the transfer of the diacylglyceryl group from phosphatidylglycerol to the sulfhydryl group of the N-terminal cysteine of a prolipoprotein, the first step in the formation of mature lipoproteins. The chain is Phosphatidylglycerol--prolipoprotein diacylglyceryl transferase from Streptococcus equi subsp. zooepidemicus (strain MGCS10565).